Consider the following 158-residue polypeptide: Ribonuclease HI (158 aa).

In terms of domain architecture, RNase H type-1 spans 3 to 144 (ELKLIHIFTD…CDQLARAAAE (142 aa)). Positions 12, 50, 72, and 136 each coordinate Mg(2+).

The protein belongs to the RNase H family. Monomer. Mg(2+) serves as cofactor.

The protein resides in the cytoplasm. It carries out the reaction Endonucleolytic cleavage to 5'-phosphomonoester.. Endonuclease that specifically degrades the RNA of RNA-DNA hybrids. The protein is Ribonuclease HI of Shewanella oneidensis (strain ATCC 700550 / JCM 31522 / CIP 106686 / LMG 19005 / NCIMB 14063 / MR-1).